A 138-amino-acid polypeptide reads, in one-letter code: Mu-like prophage FluMu G protein 2 (138 aa).

It to phage Mu protein G.

In Haemophilus influenzae (strain ATCC 51907 / DSM 11121 / KW20 / Rd), this protein is Mu-like prophage FluMu G protein 2.